The primary structure comprises 251 residues: Prolactin-7B1 (251 aa).

The N-terminal stretch at 1–29 (MNTSLTQLCFWALQILLMSNLLLWEDVVS) is a signal peptide. Asn-2 and Asn-73 each carry an N-linked (GlcNAc...) asparagine glycan. Intrachain disulfides connect Cys-100–Cys-216 and Cys-233–Cys-241.

This sequence belongs to the somatotropin/prolactin family. In terms of tissue distribution, expression restricted to placenta. Abundantly expressed in trophoblast cells of the junctional zone and trophoblasts migrating into the mesometrial decidua.

It is found in the secreted. The protein is Prolactin-7B1 (Prl7b1) of Mus musculus (Mouse).